We begin with the raw amino-acid sequence, 514 residues long: Cytochrome P450 71AP13 (514 aa).

A helical membrane pass occupies residues 20–37; it reads HSSLFAFSLLILLLKFIY. 2 N-linked (GlcNAc...) asparagine glycosylation sites follow: N127 and N184. C455 lines the heme pocket.

It belongs to the cytochrome P450 family. Requires heme as cofactor. Expressed in fruit kernel, seedlings, leaves and stems.

It localises to the membrane. The chain is Cytochrome P450 71AP13 from Prunus mume (Japanese apricot).